A 96-amino-acid chain; its full sequence is Large ribosomal subunit protein uL23 (96 aa).

The protein belongs to the universal ribosomal protein uL23 family. In terms of assembly, part of the 50S ribosomal subunit. Contacts protein L29, and trigger factor when it is bound to the ribosome.

One of the early assembly proteins it binds 23S rRNA. One of the proteins that surrounds the polypeptide exit tunnel on the outside of the ribosome. Forms the main docking site for trigger factor binding to the ribosome. The protein is Large ribosomal subunit protein uL23 of Ruthia magnifica subsp. Calyptogena magnifica.